The primary structure comprises 184 residues: MKNVTDSFVSLGHWPSAGSFGFNTDILATNLINLSVVLGVLIFFGKGVLSDLLDNRKQRILNTIRNSEELREGAIEQLEKARARLRKVEIEADEFRVNGYSEIEREKLNLIDSTYKTLEQLENYKNETINFEQQKASNQVRQRVFQQALQGALGTLNSCLNNELHLRTISANIGILAAMKQITD.

Residues leucine 27 to leucine 49 traverse the membrane as a helical segment.

It belongs to the ATPase B chain family. In terms of assembly, F-type ATPases have 2 components, F(1) - the catalytic core - and F(0) - the membrane proton channel. F(1) has five subunits: alpha(3), beta(3), gamma(1), delta(1), epsilon(1). F(0) has four main subunits: a(1), b(1), b'(1) and c(10-14). The alpha and beta chains form an alternating ring which encloses part of the gamma chain. F(1) is attached to F(0) by a central stalk formed by the gamma and epsilon chains, while a peripheral stalk is formed by the delta, b and b' chains.

It is found in the plastid. Its subcellular location is the chloroplast thylakoid membrane. Functionally, f(1)F(0) ATP synthase produces ATP from ADP in the presence of a proton or sodium gradient. F-type ATPases consist of two structural domains, F(1) containing the extramembraneous catalytic core and F(0) containing the membrane proton channel, linked together by a central stalk and a peripheral stalk. During catalysis, ATP synthesis in the catalytic domain of F(1) is coupled via a rotary mechanism of the central stalk subunits to proton translocation. In terms of biological role, component of the F(0) channel, it forms part of the peripheral stalk, linking F(1) to F(0). The sequence is that of ATP synthase subunit b, chloroplastic from Guizotia abyssinica (Niger).